Here is a 564-residue protein sequence, read N- to C-terminus: Eukaryotic translation initiation factor 3 subunit L (564 aa).

N-acetylserine is present on S2. The PCI domain occupies 331–537; it reads DAIRVFANIL…IHIADTKVAR (207 aa). N6-acetyllysine occurs at positions 465 and 549.

It belongs to the eIF-3 subunit L family. As to quaternary structure, component of the eukaryotic translation initiation factor 3 (eIF-3) complex, which is composed of 13 subunits: EIF3A, EIF3B, EIF3C, EIF3D, EIF3E, EIF3F, EIF3G, EIF3H, EIF3I, EIF3J, EIF3K, EIF3L and EIF3M. The eIF-3 complex appears to include 3 stable modules: module A is composed of EIF3A, EIF3B, EIF3G and EIF3I; module B is composed of EIF3F, EIF3H, and EIF3M; and module C is composed of EIF3C, EIF3D, EIF3E, EIF3K and EIF3L. EIF3C of module C binds EIF3B of module A and EIF3H of module B, thereby linking the three modules. EIF3J is a labile subunit that binds to the eIF-3 complex via EIF3B. The eIF-3 complex may interact with RPS6KB1 under conditions of nutrient depletion. Mitogenic stimulation may lead to binding and activation of a complex composed of MTOR and RPTOR, leading to phosphorylation and release of RPS6KB1 and binding of EIF4B to eIF-3. Interacts with RRN3.

It localises to the cytoplasm. Component of the eukaryotic translation initiation factor 3 (eIF-3) complex, which is required for several steps in the initiation of protein synthesis. The eIF-3 complex associates with the 40S ribosome and facilitates the recruitment of eIF-1, eIF-1A, eIF-2:GTP:methionyl-tRNAi and eIF-5 to form the 43S pre-initiation complex (43S PIC). The eIF-3 complex stimulates mRNA recruitment to the 43S PIC and scanning of the mRNA for AUG recognition. The eIF-3 complex is also required for disassembly and recycling of post-termination ribosomal complexes and subsequently prevents premature joining of the 40S and 60S ribosomal subunits prior to initiation. The eIF-3 complex specifically targets and initiates translation of a subset of mRNAs involved in cell proliferation, including cell cycling, differentiation and apoptosis, and uses different modes of RNA stem-loop binding to exert either translational activation or repression. In Mus musculus (Mouse), this protein is Eukaryotic translation initiation factor 3 subunit L (Eif3l).